Reading from the N-terminus, the 122-residue chain is Holo-[acyl-carrier-protein] synthase (122 aa).

2 residues coordinate Mg(2+): Asp-8 and Glu-56.

Belongs to the P-Pant transferase superfamily. AcpS family. It depends on Mg(2+) as a cofactor.

It is found in the cytoplasm. The catalysed reaction is apo-[ACP] + CoA = holo-[ACP] + adenosine 3',5'-bisphosphate + H(+). Functionally, transfers the 4'-phosphopantetheine moiety from coenzyme A to a Ser of acyl-carrier-protein. This Streptomyces griseus subsp. griseus (strain JCM 4626 / CBS 651.72 / NBRC 13350 / KCC S-0626 / ISP 5235) protein is Holo-[acyl-carrier-protein] synthase.